We begin with the raw amino-acid sequence, 284 residues long: Protein phosphatase 1 regulatory subunit 3B (284 aa).

Residues 61-64 (RVSF) carry the PP1-binding motif motif. Positions 124–232 (RNRLQTNHVC…SNKGKNYRIT (109 aa)) constitute a CBM21 domain. Ser-260 is subject to Phosphoserine.

As to quaternary structure, interacts with glycogen, PPP1CC catalytic subunit of PP1 and PYGL. Associates with glycogen particles. Forms complexes with debranching enzyme, glycogen phosphorylase, glycogen synthase and phosphorylase kinase which is necessary for its regulation of PP1 activity. As to expression, highly expressed in liver (at protein level). Expressed predominantly in liver. Expressed moderately in heart. Expressed weakly in prostate, stomach, thyroid, lung, kidney, spleen and skeletal muscle.

In terms of biological role, acts as a glycogen-targeting subunit for phosphatase PP1. Facilitates interaction of the PP1 with enzymes of the glycogen metabolism and regulates its activity. Suppresses the rate at which PP1 dephosphorylates (inactivates) glycogen phosphorylase and enhances the rate at which it activates glycogen synthase and therefore limits glycogen breakdown. Its activity is inhibited by PYGL, resulting in inhibition of the glycogen synthase and glycogen phosphorylase phosphatase activities of PP1. Dramatically increases basal and insulin-stimulated glycogen synthesis upon overexpression in hepatocytes. In Mus musculus (Mouse), this protein is Protein phosphatase 1 regulatory subunit 3B (Ppp1r3b).